The chain runs to 322 residues: N-acetyl-gamma-glutamyl-phosphate reductase 2 (322 aa).

Cys-117 is an active-site residue.

Belongs to the NAGSA dehydrogenase family. Type 2 subfamily.

The protein resides in the cytoplasm. It catalyses the reaction N-acetyl-L-glutamate 5-semialdehyde + phosphate + NADP(+) = N-acetyl-L-glutamyl 5-phosphate + NADPH + H(+). The protein operates within amino-acid biosynthesis; L-arginine biosynthesis; N(2)-acetyl-L-ornithine from L-glutamate: step 3/4. Catalyzes the NADPH-dependent reduction of N-acetyl-5-glutamyl phosphate to yield N-acetyl-L-glutamate 5-semialdehyde. This Nostoc sp. (strain PCC 7120 / SAG 25.82 / UTEX 2576) protein is N-acetyl-gamma-glutamyl-phosphate reductase 2.